The following is a 473-amino-acid chain: MRNPKSFCVVAGFVRLPKSSLGQVRYYSIPNDVSIPASKGKFIPGSGTYPKGFLVAGAHAGVKESNTQFPDVALICSETPCSAAAVFTTNKFQAAPVQVSKQVLEKRQGAGIRGVVINSGCANAVTGKGGLEDAKMMSAKVDECNGTPSTGPQDTSTLVMSTGVIGQRLPIKKILDAIPTAHSNLASTHSTWLATARAICTTDTFPKLLSRTFTLPSSPNRQYCLAGMTKGAGMIHPNMATLLGILCTDVPISPSALKALLTHAVSRSFNAISIDGDTSTNDTIALLANGAAGGEAITTTSSQDYAAMQTILTSFAQSLAQLVVRDGEGATKFITVRVCNSPSHADAKAIASTIARSPLVKTALYGKDANWGRILCAIGYAQGIAEGTVVPERTSVSFRPVDGSAELKLLVNGEPEAVDEERAARILQDEDLEIVVDLGGGQKGEKGLGGEEGLYWFCDFSHEYVTINGDYRT.

Substrate contacts are provided by threonine 201, lysine 230, threonine 241, glutamate 328, asparagine 468, and threonine 473. Threonine 241 (nucleophile) is an active-site residue.

It belongs to the ArgJ family. In terms of assembly, heterodimer of an alpha and a beta chain. In terms of processing, the alpha and beta chains are autoproteolytically processed from a single precursor protein within the mitochondrion.

It localises to the mitochondrion matrix. The catalysed reaction is N(2)-acetyl-L-ornithine + L-glutamate = N-acetyl-L-glutamate + L-ornithine. It catalyses the reaction L-glutamate + acetyl-CoA = N-acetyl-L-glutamate + CoA + H(+). The protein operates within amino-acid biosynthesis; L-arginine biosynthesis; L-ornithine and N-acetyl-L-glutamate from L-glutamate and N(2)-acetyl-L-ornithine (cyclic): step 1/1. Its pathway is amino-acid biosynthesis; L-arginine biosynthesis; N(2)-acetyl-L-ornithine from L-glutamate: step 1/4. Catalyzes two activities which are involved in the cyclic version of arginine biosynthesis: the synthesis of acetylglutamate from glutamate and acetyl-CoA, and of ornithine by transacetylation between acetylornithine and glutamate. The chain is Arginine biosynthesis bifunctional protein ArgJ, mitochondrial from Ajellomyces capsulatus (strain H143) (Darling's disease fungus).